The following is a 1140-amino-acid chain: DNA damage-binding protein 1 (1140 aa).

The residue at position 2 (Ser2) is an N-acetylserine. The segment at 2-768 (SYNYVVTAQK…QALSSSVSSS (767 aa)) is interaction with CDT1. Residues 13 to 356 (TAVNGCVTGH…VVAMETFTNL (344 aa)) form a WD repeat beta-propeller A region. Residues 391–708 (RNGIGIHEHA…LTIGTIDEIQ (318 aa)) form a WD repeat beta-propeller B; Interaction with CUL4A region. The WD repeat beta-propeller C stretch occupies residues 709 to 1043 (KLHIRTVPLY…NGMIGLVTSL (335 aa)). The tract at residues 771 to 1140 (FSSSTAPHET…KVVEELTRIH (370 aa)) is interaction with CDT1 and CUL4A. An N6-acetyllysine modification is found at Lys1067. Lys1121 participates in a covalent cross-link: Glycyl lysine isopeptide (Lys-Gly) (interchain with G-Cter in SUMO2). Thr1125 carries the phosphothreonine modification.

It belongs to the DDB1 family. In terms of assembly, component of the UV-DDB complex which includes DDB1 and DDB2; the heterodimer dimerizes to give rise to a heterotetramer when bound to damaged DNA. The UV-DDB complex interacts with monoubiquitinated histone H2A and binds to XPC via the DDB2 subunit. Component of numerous DCX (DDB1-CUL4-X-box) E3 ubiquitin-protein ligase complexes which consist of a core of DDB1, CUL4A or CUL4B and RBX1. DDB1 may recruit specific substrate targeting subunits to the DCX complex. These substrate targeting subunits are generally known as DCAF (DDB1- and CUL4-associated factor) or CDW (CUL4-DDB1-associated WD40-repeat) proteins. Interacts with AMBRA1, ATG16L1, BTRC, CRBN, DCAF1, DCAF4, DCAF5, DCAF6, DCAF7, DCAF8, DCAF9, DCAF10, DCAF11, DCAF12, DCAF15, DCAF16, DCAF17, DDA1, DET1, DTL, ERCC8, FBXW5, FBXW8, GRWD1, KATNB1, NLE1, NUP43, PAFAH1B1, PHIP, PWP1, RBBP4, RBBP5, RBBP7, COP1, SNRNP40, DCAF1, WDR5, WDR5B, WDR12, WDR26, WDR39, WDR42, WDR53, WDR59, WDR61, WSB1, WSB2, LRWD1 and WDTC1. DCX complexes may associate with the COP9 signalosome, and this inhibits the E3 ubiquitin-protein ligase activity of the complex. Interacts with NF2, TSC1 and TSC2. Interacts with AGO1 and AGO2. Associates with the E3 ligase complex containing DYRK2, EDD/UBR5, DDB1 and DCAF1 proteins (EDVP complex). Interacts directly with DYRK2. DCX(DTL) complex interacts with FBXO11; does not ubiquitinate and degradate FBXO11. Interacts with TRPC4AP. Interacts with CRY1 and CRY2. The DDB1-CUL4A complex interacts with CRY1. May also interact with DCUN1D1, DCUN1D2, DCUN1D3 and DCUN1D5. Component of the DCX(DCAF13) E3 ubiquitin ligase complex, at least composed of CUL4 (CUL4A or CUL4B), DDB1, DCAF13 and RBX1. Interacts with DCAF13 (via WD40 domain). Phosphorylated by ABL1. In terms of processing, ubiquitinated by CUL4A. Subsequently degraded by ubiquitin-dependent proteolysis. Post-translationally, acetylated, promoting interaction with CUL4 (CUL4A or CUL4B) and subsequent formation of DCX (DDB1-CUL4-X-box) E3 ubiquitin-protein ligase complexes. Deacetylation by SIRT7 impairs the interaction with CUL4 (CUL4A or CUL4B) and formation of DCX (DDB1-CUL4-X-box) E3 ubiquitin-protein ligase complexes.

It localises to the cytoplasm. The protein localises to the nucleus. Its pathway is protein modification; protein ubiquitination. In terms of biological role, protein, which is both involved in DNA repair and protein ubiquitination, as part of the UV-DDB complex and DCX (DDB1-CUL4-X-box) complexes, respectively. Core component of the UV-DDB complex (UV-damaged DNA-binding protein complex), a complex that recognizes UV-induced DNA damage and recruit proteins of the nucleotide excision repair pathway (the NER pathway) to initiate DNA repair. The UV-DDB complex preferentially binds to cyclobutane pyrimidine dimers (CPD), 6-4 photoproducts (6-4 PP), apurinic sites and short mismatches. Also functions as a component of numerous distinct DCX (DDB1-CUL4-X-box) E3 ubiquitin-protein ligase complexes which mediate the ubiquitination and subsequent proteasomal degradation of target proteins. The functional specificity of the DCX E3 ubiquitin-protein ligase complex is determined by the variable substrate recognition component recruited by DDB1. DCX(DDB2) (also known as DDB1-CUL4-ROC1, CUL4-DDB-ROC1 and CUL4-DDB-RBX1) may ubiquitinate histone H2A, histone H3 and histone H4 at sites of UV-induced DNA damage. The ubiquitination of histones may facilitate their removal from the nucleosome and promote subsequent DNA repair. DCX(DDB2) also ubiquitinates XPC, which may enhance DNA-binding by XPC and promote NER. DCX(DTL) plays a role in PCNA-dependent polyubiquitination of CDT1 and MDM2-dependent ubiquitination of TP53 in response to radiation-induced DNA damage and during DNA replication. DCX(ERCC8) (the CSA complex) plays a role in transcription-coupled repair (TCR). The DDB1-CUL4A-DTL E3 ligase complex regulates the circadian clock function by mediating the ubiquitination and degradation of CRY1. DDB1-mediated CRY1 degradation promotes FOXO1 protein stability and FOXO1-mediated gluconeogenesis in the liver. By acting on TET dioxygenses, essential for oocyte maintenance at the primordial follicle stage, hence essential for female fertility. Maternal factor required for proper zygotic genome activation and genome reprogramming. The polypeptide is DNA damage-binding protein 1 (DDB1) (Pongo abelii (Sumatran orangutan)).